The chain runs to 278 residues: Dermonecrotic toxin LspiSicTox-betaIE2i (278 aa).

The active site involves His-5. Glu-25 and Asp-27 together coordinate Mg(2+). The active-site Nucleophile is His-41. 2 disulfide bridges follow: Cys-45/Cys-51 and Cys-47/Cys-190. Glu-85 contacts Mg(2+).

This sequence belongs to the arthropod phospholipase D family. Class II subfamily. It depends on Mg(2+) as a cofactor. As to expression, expressed by the venom gland.

Its subcellular location is the secreted. The catalysed reaction is an N-(acyl)-sphingosylphosphocholine = an N-(acyl)-sphingosyl-1,3-cyclic phosphate + choline. It catalyses the reaction an N-(acyl)-sphingosylphosphoethanolamine = an N-(acyl)-sphingosyl-1,3-cyclic phosphate + ethanolamine. The enzyme catalyses a 1-acyl-sn-glycero-3-phosphocholine = a 1-acyl-sn-glycero-2,3-cyclic phosphate + choline. It carries out the reaction a 1-acyl-sn-glycero-3-phosphoethanolamine = a 1-acyl-sn-glycero-2,3-cyclic phosphate + ethanolamine. Its function is as follows. Dermonecrotic toxins cleave the phosphodiester linkage between the phosphate and headgroup of certain phospholipids (sphingolipid and lysolipid substrates), forming an alcohol (often choline) and a cyclic phosphate. This toxin acts on sphingomyelin (SM). It may also act on ceramide phosphoethanolamine (CPE), lysophosphatidylcholine (LPC) and lysophosphatidylethanolamine (LPE), but not on lysophosphatidylserine (LPS), and lysophosphatidylglycerol (LPG). It acts by transphosphatidylation, releasing exclusively cyclic phosphate products as second products. Induces dermonecrosis, hemolysis, increased vascular permeability, edema, inflammatory response, and platelet aggregation. This chain is Dermonecrotic toxin LspiSicTox-betaIE2i, found in Loxosceles spinulosa (Recluse spider).